Consider the following 1262-residue polypeptide: DNA-directed RNA polymerase subunit beta' (1262 aa).

Positions 220, 294, 301, and 304 each coordinate Zn(2+).

This sequence belongs to the RNA polymerase beta' chain family. RpoC2 subfamily. In terms of assembly, in cyanobacteria the RNAP catalytic core is composed of 2 alpha, 1 beta, 1 beta', 1 gamma and 1 omega subunit. When a sigma factor is associated with the core the holoenzyme is formed, which can initiate transcription. Zn(2+) serves as cofactor.

It carries out the reaction RNA(n) + a ribonucleoside 5'-triphosphate = RNA(n+1) + diphosphate. Its function is as follows. DNA-dependent RNA polymerase catalyzes the transcription of DNA into RNA using the four ribonucleoside triphosphates as substrates. The chain is DNA-directed RNA polymerase subunit beta' from Gloeobacter violaceus (strain ATCC 29082 / PCC 7421).